A 1706-amino-acid polypeptide reads, in one-letter code: DDT domain-containing protein PTM (1706 aa).

Basic residues predominate over residues 1–16 (MEAKVPRPRGRPRKRQ). 2 disordered regions span residues 1-27 (MEAKVPRPRGRPRKRQRLEDDNRKLNN) and 144-168 (VTNSEDGDSYSDSESSESGDKRGSD). The short motif at 9–18 (RGRPRKRQRL) is the Nuclear localization signal element. Residues 148–160 (EDGDSYSDSESSE) show a composition bias toward acidic residues. A DDT domain is found at 192-252 (EEAVAHLLSV…LRALKGHLER (61 aa)). Residues 375–393 (YKEKEVTDSSTNESKDLDS) show a composition bias toward basic and acidic residues. Residues 375 to 408 (YKEKEVTDSSTNESKDLDSRCTNGGSNEVSSDLD) form a disordered region. The span at 394 to 408 (RCTNGGSNEVSSDLD) shows a compositional bias: polar residues. The PHD-type 1 zinc finger occupies 411–458 (SDECRICGMDGTLLCCDGCPLAYHSRCIGVVKMYIPDGPWFCPECTIN). 2 disordered regions span residues 1165-1194 (KPPSQQLSSQKPRENTSGVKQVTPDSSVSK) and 1311-1345 (TNQKQRQGNSGLDSDSERMSEQKDSKPSTPLPATP). Polar residues-rich tracts occupy residues 1167–1194 (PSQQLSSQKPRENTSGVKQVTPDSSVSK) and 1311–1323 (TNQKQRQGNSGLD). Basic and acidic residues predominate over residues 1325–1336 (DSERMSEQKDSK). The next 5 membrane-spanning stretches (helical) occupy residues 1539-1559 (ALGSITLGSFGAITQFKSILP), 1569-1589 (LAGPFAGAALSVSMFAVGLFL), 1596-1616 (ANDLVQVPSMLFQGSLLLGLI), 1624-1644 (AALHAATVSIHPLVIAGWCGL), and 1682-1702 (MLGLRVLGGPLALPWGLYVLI).

In terms of assembly, interacts (via the DDT domain) with CHR11 (via C-terminus).

It localises to the plastid. The protein localises to the chloroplast outer membrane. The protein resides in the nucleus. Membrane-bound transcription factor required for the plastid-to-nucleus retrograde signaling. Functions in multiple retrograde pathways. The plastid-to-nucleus signal plays an important role in the coordinated expression of both nuclear- and chloroplast-localized genes that encode photosynthesis-related proteins. In the nucleus, activates ABI4 transcription in a PHD-dependent manner associated with histone modifications. Localized primarily in the chloroplast outer membrane as dormant form and, in response to retrograde signals, is released from the membrane through proteolytic cleavage and its cleaved fragment containing the transcription factor domain is redistributed to the nucleus, where it regulates the expression of particular nuclear genes. The chain is DDT domain-containing protein PTM from Arabidopsis thaliana (Mouse-ear cress).